Reading from the N-terminus, the 291-residue chain is tRNA dimethylallyltransferase (291 aa).

11–18 contacts ATP; it reads GPTASGKS. Residue 13–18 participates in substrate binding; sequence TASGKS. The interval 42–45 is interaction with substrate tRNA; sequence DSMQ.

It belongs to the IPP transferase family. As to quaternary structure, monomer. The cofactor is Mg(2+).

It carries out the reaction adenosine(37) in tRNA + dimethylallyl diphosphate = N(6)-dimethylallyladenosine(37) in tRNA + diphosphate. In terms of biological role, catalyzes the transfer of a dimethylallyl group onto the adenine at position 37 in tRNAs that read codons beginning with uridine, leading to the formation of N6-(dimethylallyl)adenosine (i(6)A). The sequence is that of tRNA dimethylallyltransferase from Rubrobacter xylanophilus (strain DSM 9941 / JCM 11954 / NBRC 16129 / PRD-1).